Consider the following 1050-residue polypeptide: Mitotic checkpoint serine/threonine-protein kinase BUB1 beta (1050 aa).

One can recognise a BUB1 N-terminal domain in the interval 62-226 (FEYEIRFYTG…FESSVPQRST (165 aa)). Positions 111-118 (GEKRYYSD) match the Nuclear localization signal motif. A necessary for interaction with KNL1 region spans residues 152–185 (AQFYISWAEEYEARENFRKADAIFQEGIQQKAEP). A D-box motif is present at residues 224–232 (RSTLAELKS). Lysine 250 carries the N6-acetyllysine; by PCAF modification. A Phosphoserine modification is found at serine 367. The tract at residues 368–393 (TRKPGKEEGDPLQRVQSHQQASEEKK) is disordered. Position 435 is a phosphoserine (serine 435). Positions 456–480 (IQTTQQERTGDQQEETMPTKETTKL) are disordered. A phosphoserine mark is found at serine 543, serine 665, and serine 670. At serine 676 the chain carries Phosphoserine; by PLK1. The residue at position 697 (serine 697) is a Phosphoserine. The Protein kinase domain occupies 766-1050 (YCIKREYLIC…LTSPGALLFQ (285 aa)). 772-780 (YLICEDYKL) is a binding site for ATP. The residue at position 792 (threonine 792) is a Phosphothreonine; by PLK1. Residue lysine 795 participates in ATP binding. The active-site Proton acceptor is aspartate 882. Threonine 1008 carries the post-translational modification Phosphothreonine; by PLK1. Threonine 1042 carries the post-translational modification Phosphothreonine. Serine 1043 bears the Phosphoserine mark.

It belongs to the protein kinase superfamily. Ser/Thr protein kinase family. BUB1 subfamily. Interacts with CENPE. Interacts with PLK1. Part of a complex containing BUB3, CDC20 and BUB1B. Interacts with anaphase-promoting complex/cyclosome (APC/C). Interacts with KNL1. Interacts with KAT2B. Interacts with RIPK3. Interacts with the closed conformation form of MAD2L1. Post-translationally, proteolytically cleaved by caspase-3 in a cell cycle specific manner. The cleavage might be involved in the durability of the cell cycle delay. Caspase-3 cleavage is associated with abrogation of the mitotic checkpoint. The major site of cleavage is at Asp-610. In terms of processing, acetylation at Lys-250 regulates its degradation and timing in anaphase entry. Ubiquitinated. Degraded by the proteasome. Ubiquitinated by UBR5, promoting disassembly of the mitotic checkpoint complex from the APC/C complex. Post-translationally, sumoylated with SUMO2 and SUMO3. The sumoylation mediates the association with CENPE at the kinetochore. In terms of processing, autophosphorylated in vitro. Intramolecular autophosphorylation is stimulated by CENPE. Phosphorylated during mitosis and hyperphosphorylated in mitotically arrested cells. Phosphorylation at Ser-670 and Ser-1043 occurs at kinetochores upon mitotic entry with dephosphorylation at the onset of anaphase. As to expression, highly expressed in thymus followed by spleen. Preferentially expressed in tissues with a high mitotic index.

It localises to the cytoplasm. The protein resides in the nucleus. It is found in the chromosome. Its subcellular location is the centromere. The protein localises to the kinetochore. It localises to the cytoskeleton. The protein resides in the microtubule organizing center. It is found in the centrosome. It catalyses the reaction L-seryl-[protein] + ATP = O-phospho-L-seryl-[protein] + ADP + H(+). The catalysed reaction is L-threonyl-[protein] + ATP = O-phospho-L-threonyl-[protein] + ADP + H(+). Kinase activity stimulated by CENPE. In terms of biological role, essential component of the mitotic checkpoint. Required for normal mitosis progression. The mitotic checkpoint delays anaphase until all chromosomes are properly attached to the mitotic spindle. One of its checkpoint functions is to inhibit the activity of the anaphase-promoting complex/cyclosome (APC/C) by blocking the binding of CDC20 to APC/C, independently of its kinase activity. The other is to monitor kinetochore activities that depend on the kinetochore motor CENPE. Required for kinetochore localization of CENPE. Negatively regulates PLK1 activity in interphase cells and suppresses centrosome amplification. Also implicated in triggering apoptosis in polyploid cells that exit aberrantly from mitotic arrest. May play a role for tumor suppression. This chain is Mitotic checkpoint serine/threonine-protein kinase BUB1 beta (BUB1B), found in Homo sapiens (Human).